A 1343-amino-acid polypeptide reads, in one-letter code: ABC multidrug transporter atrD (1343 aa).

Polar residues predominate over residues 1-10 (MSPLETNPLS). Residues 1-67 (MSPLETNPLS…HRPKSSSSNN (67 aa)) are disordered. Residues 20–31 (ETSTTEEQASTP) show a composition bias toward low complexity. N-linked (GlcNAc...) asparagine glycosylation is present at Asn-99. Helical transmembrane passes span 114–134 (ILIM…LPLF), 163–183 (YFVY…VGFI), 235–255 (KVGL…IAYV), and 263–283 (ICSS…QFII). An ABC transmembrane type-1 1 domain is found at 115-403 (LIMVISTICA…VSPNAQAFTN (289 aa)). Asn-309 carries an N-linked (GlcNAc...) asparagine glycan. 2 helical membrane-spanning segments follow: residues 339–359 (IVMG…YGLG) and 366–386 (FLVD…AILI). The ABC transporter 1 domain maps to 438–683 (IELRNVKHIY…GGAYRKLVEA (246 aa)). Residue 473 to 480 (GPSGSGKS) participates in ATP binding. Asn-545 carries N-linked (GlcNAc...) asparagine glycosylation. The next 2 membrane-spanning stretches (helical) occupy residues 773 to 793 (MLIG…QAVL) and 820 to 840 (LMFF…GAAF). Positions 774 to 1063 (LIGLVFSVLA…VFSFAPDMGK (290 aa)) constitute an ABC transmembrane type-1 2 domain. Residue Asn-872 is glycosylated (N-linked (GlcNAc...) asparagine). 4 helical membrane-spanning segments follow: residues 887 to 907 (HLSG…TTLG), 920 to 942 (LALV…FYML), 1010 to 1030 (ALVF…LGHH), and 1037 to 1057 (FFVC…VFSF). An N-linked (GlcNAc...) asparagine glycan is attached at Asn-1083. The 239-residue stretch at 1098–1336 (IEFRNVHFRY…KGRYYELVNL (239 aa)) folds into the ABC transporter 2 domain. Residue 1133–1140 (GPSGCGKS) coordinates ATP.

The protein belongs to the ABC transporter superfamily. ABCB family. Multidrug resistance exporter (TC 3.A.1.201) subfamily.

It is found in the cell membrane. Its activity is regulated as follows. Fenamirol efflux transporter activity is inhibited by the cyclosporin derivative PSC 833, nigericin, reserpine and valinomycin. The effect of reserpine is transiant, while that of the cyclosporin derivative PSC 833, nigericin and valinomycin is proportional to the time of exposure. Cyclohexinmide has inhibitory effect only when applied prior to addition of the fungicide. Functionally, pleiotropic ABC efflux transporter involved in the protection of the cells against a wide range of toxic compounds. Confers resistance to the azole fenarimol via efflux transport. May also be involved in the secretion of penicillin. The sequence is that of ABC multidrug transporter atrD from Emericella nidulans (strain FGSC A4 / ATCC 38163 / CBS 112.46 / NRRL 194 / M139) (Aspergillus nidulans).